We begin with the raw amino-acid sequence, 116 residues long: Small ribosomal subunit protein uS13m (116 aa).

The interval 92–116 (HQDGSPLRGQRTHTNARTARKQIRK) is disordered.

It belongs to the universal ribosomal protein uS13 family. In terms of assembly, part of the small ribosomal subunit.

It is found in the mitochondrion. Its function is as follows. Located at the top of the head of the small subunit, it contacts several helices of the 18S rRNA. In Triticum aestivum (Wheat), this protein is Small ribosomal subunit protein uS13m (RPS13).